Reading from the N-terminus, the 81-residue chain is Large ribosomal subunit protein bL31B (81 aa).

It belongs to the bacterial ribosomal protein bL31 family. Type B subfamily. As to quaternary structure, part of the 50S ribosomal subunit.

The chain is Large ribosomal subunit protein bL31B from Bacillus cereus (strain G9842).